The following is a 303-amino-acid chain: Bifunctional protein FolD (303 aa).

NADP(+)-binding positions include 175–177 and Ile243; that span reads GVS.

Belongs to the tetrahydrofolate dehydrogenase/cyclohydrolase family. As to quaternary structure, homodimer.

It carries out the reaction (6R)-5,10-methylene-5,6,7,8-tetrahydrofolate + NADP(+) = (6R)-5,10-methenyltetrahydrofolate + NADPH. The enzyme catalyses (6R)-5,10-methenyltetrahydrofolate + H2O = (6R)-10-formyltetrahydrofolate + H(+). It participates in one-carbon metabolism; tetrahydrofolate interconversion. In terms of biological role, catalyzes the oxidation of 5,10-methylenetetrahydrofolate to 5,10-methenyltetrahydrofolate and then the hydrolysis of 5,10-methenyltetrahydrofolate to 10-formyltetrahydrofolate. In Xanthomonas axonopodis pv. citri (strain 306), this protein is Bifunctional protein FolD.